The sequence spans 61 residues: Short neurotoxin 1 (61 aa).

4 disulfide bridges follow: Cys-3-Cys-23, Cys-17-Cys-40, Cys-42-Cys-53, and Cys-54-Cys-59.

It belongs to the three-finger toxin family. Short-chain subfamily. Type I alpha-neurotoxin sub-subfamily. Expressed by the venom gland.

It localises to the secreted. In terms of biological role, binds to muscle nicotinic acetylcholine receptor (nAChR) and inhibit acetylcholine from binding to the receptor, thereby impairing neuromuscular transmission. In Naja annulata annulata (Banded water cobra), this protein is Short neurotoxin 1.